We begin with the raw amino-acid sequence, 279 residues long: uncharacterized protein (279 aa).

2 disordered regions span residues 50–109 (YTYN…YNKN) and 249–279 (SQSQ…SPKL). Residues 68-109 (NNNSNYNNNNNNNNNNNNNNNNNNNNNNNKNNNNNNYNYNKN) are compositionally biased toward low complexity.

This is an uncharacterized protein from Dictyostelium discoideum (Social amoeba).